A 71-amino-acid chain; its full sequence is Conotoxin TxMMSK-05 (71 aa).

The first 20 residues, Met-1–Ala-20, serve as a signal peptide directing secretion. The propeptide occupies Val-21 to Arg-52. Intrachain disulfides connect Cys-54-Cys-70, Cys-55-Cys-66, and Cys-60-Cys-69.

It belongs to the conotoxin M superfamily. As to expression, expressed by the venom duct.

It localises to the secreted. In Conus textile (Cloth-of-gold cone), this protein is Conotoxin TxMMSK-05.